Consider the following 425-residue polypeptide: Glucose-6-phosphate 1-dehydrogenase (425 aa).

NADP(+) is bound by residues Arg44 and Lys135. Substrate is bound by residues His165, Lys169, Glu201, and Asp220. Residue His225 is the Proton acceptor of the active site. Residue Lys311 coordinates substrate.

This sequence belongs to the glucose-6-phosphate dehydrogenase family.

The enzyme catalyses D-glucose 6-phosphate + NADP(+) = 6-phospho-D-glucono-1,5-lactone + NADPH + H(+). It functions in the pathway carbohydrate degradation; pentose phosphate pathway; D-ribulose 5-phosphate from D-glucose 6-phosphate (oxidative stage): step 1/3. Its function is as follows. Catalyzes the oxidation of glucose 6-phosphate to 6-phosphogluconolactone. The polypeptide is Glucose-6-phosphate 1-dehydrogenase (Helicobacter pylori (strain ATCC 700392 / 26695) (Campylobacter pylori)).